Consider the following 122-residue polypeptide: Large ribosomal subunit protein uL14 (122 aa).

Belongs to the universal ribosomal protein uL14 family. Part of the 50S ribosomal subunit. Forms a cluster with proteins L3 and L19. In the 70S ribosome, L14 and L19 interact and together make contacts with the 16S rRNA in bridges B5 and B8.

Binds to 23S rRNA. Forms part of two intersubunit bridges in the 70S ribosome. The chain is Large ribosomal subunit protein uL14 from Bartonella quintana (strain Toulouse) (Rochalimaea quintana).